Reading from the N-terminus, the 464-residue chain is Calcitonin gene-related peptide type 1 receptor (464 aa).

An N-terminal signal peptide occupies residues 1 to 23 (MMDKKCTLCFLFLLLLNMALIAA). At 24–139 (ESEEGANQTD…STHEKVKTAL (116 aa)) the chain is on the extracellular side. N-linked (GlcNAc...) asparagine glycosylation is found at asparagine 30, asparagine 66, asparagine 118, asparagine 123, asparagine 128, and asparagine 129. Intrachain disulfides connect cysteine 48–cysteine 74, cysteine 65–cysteine 105, and cysteine 88–cysteine 127. A helical transmembrane segment spans residues 140–164 (NLFYLTIIGHGLSIASLIISLIIFF). Topologically, residues 165-175 (YFKSLSCQRIT) are cytoplasmic. The chain crosses the membrane as a helical span at residues 176–198 (LHKNLFFSFVCNSIVTIIHLTAV). Topologically, residues 199-209 (ANNQALVATNP) are extracellular. Residues 210-238 (VSCKVSQFIHLYLMGCNYFWMLCEGIYLH) traverse the membrane as a helical segment. Over 239–252 (TLIVVAVFAEKQHL) the chain is Cytoplasmic. Residues 253-273 (MWYYFLGWGFPLLPACIHAIA) form a helical membrane-spanning segment. The Extracellular portion of the chain corresponds to 274–289 (RSLYYNDNCWISSDTH). Positions 288-289 (TH) are required for RAMP3 interaction. The chain crosses the membrane as a helical span at residues 290 to 314 (LLYIIHGPICAALLVNLFFLLNIVR). Over 315–329 (VLITKLKVTHQAESN) the chain is Cytoplasmic. Residues 330-351 (LYMKAVRATLILVPLLGIEFVL) traverse the membrane as a helical segment. The Extracellular segment spans residues 352 to 366 (FPWRPEGKVAEEVYD). The chain crosses the membrane as a helical span at residues 367–387 (YVMHILMHYQGLLVSTIFCFF). The Cytoplasmic segment spans residues 388–464 (NGEVQAILRR…KPEKMYDLVM (77 aa)). Phosphoserine occurs at positions 420 and 445.

Belongs to the G-protein coupled receptor 2 family. In terms of assembly, heterodimer of CALCRL and RAMP1; the receptor complex functions as CGRP receptor. Heterodimer of CALCRL and RAMP2 or CALCRL and RAMP3; the complexes function as adrenomedullin receptor.

The protein localises to the cell membrane. Its function is as follows. G protein-coupled receptor which specificity is determined by its interaction with receptor-activity-modifying proteins (RAMPs). Together with RAMP1, form the receptor complex for calcitonin-gene-related peptides CALCA/CGRP1 and CALCB/CGRP2. Together with RAMP2 or RAMP3, function as receptor complexes for adrenomedullin (ADM and ADM2). Ligand binding causes a conformation change that triggers signaling via guanine nucleotide-binding proteins (G proteins) and modulates the activity of downstream effectors. Activates cAMP-dependent pathway. This chain is Calcitonin gene-related peptide type 1 receptor, found in Rattus norvegicus (Rat).